The primary structure comprises 340 residues: Probable HTH-type transcriptional regulator EndR (340 aa).

The 58-residue stretch at 1 to 58 folds into the HTH lacI-type domain; that stretch reads MVTTMKEVAERAGVSKSTVSQFLQKRYNYMSENTKKKIEQAIEDLSYIPNEVARSLKQ. A DNA-binding region (H-T-H motif) is located at residues 5–24; that stretch reads MKEVAERAGVSKSTVSQFLQ.

Functionally, putative repressor of the endoglucanase operon. This Paenibacillus polymyxa (Bacillus polymyxa) protein is Probable HTH-type transcriptional regulator EndR (endR).